We begin with the raw amino-acid sequence, 486 residues long: Probable transporter MCH1 (486 aa).

12 helical membrane-spanning segments follow: residues 31–51, 68–88, 95–115, 135–155, 174–194, 211–231, 268–288, 312–333, 349–369, 377–397, 409–429, and 457–477; these read IFAL…FSMY, SVSI…GYLG, YLAL…SGIF, EMAL…YASL, TYTP…SSLW, VAGI…IIFF, FFTD…GGPF, FSTH…VGFS, VIAL…FTVF, VVTI…PTIV, IWGS…LLFA, and FVIT…IWVF.

It belongs to the major facilitator superfamily.

It localises to the vacuole membrane. Probable transporter. This is Probable transporter MCH1 (MCH1) from Yarrowia lipolytica (strain CLIB 122 / E 150) (Yeast).